A 311-amino-acid polypeptide reads, in one-letter code: MAVTFPPKISPTLMTPDPHFIPGYSGFCPQYRYSLGKTYGQLTSHLLTNPDIRRSGHLVLQSNPFPPAPRGHSYNEASQELGGRRRRQRLGDPKLTISMIPGYTGFIPRSQKFFAKTYAETSWDALSDFHNEQQMQESQRQEMLLTSKLQEGRQPQTEHEKQLLTARHRTPLPALSKEPAPFMSLRGFQPQGSPYYMEEENPNKYFISGYTGYVPRSRFLIGNGYPITTNRAMVEFAHMNQKKGVRFSDQQGHNEGDNLHTEQGQIYLEELGLLPRYTGYVPGYKFQFGNTFGRLTQNALGQSTLQKQTVN.

Disordered regions lie at residues 64–93 and 150–183; these read PFPP…LGDP and QEGR…APFM.

This sequence belongs to the CIMIP2 family. Expressed in airway epithelial cells.

It localises to the cytoplasm. Its subcellular location is the cytoskeleton. The protein localises to the cilium axoneme. Functionally, microtubule inner protein (MIP) part of the dynein-decorated doublet microtubules (DMTs) in cilia axoneme, which is required for motile cilia beating. The sequence is that of Ciliary microtubule inner protein 2B (cimip2b) from Xenopus laevis (African clawed frog).